A 436-amino-acid chain; its full sequence is T-box transcription factor TBX6 (436 aa).

Positions Leu-100–Glu-273 form a DNA-binding region, T-box. Positions Asn-274 to Ala-284 are enriched in basic and acidic residues. Disordered regions lie at residues Asn-274–Pro-344 and Pro-360–Ser-383. Residues Glu-332–Pro-344 are compositionally biased toward low complexity.

The protein resides in the nucleus. Its function is as follows. T-box transcription factor that plays an essential role in the determination of the fate of axial stem cells: neural vs mesodermal. Acts in part by down-regulating, a specific enhancer (N1) of SOX2, to inhibit neural development. Seems to play also an essential role in left/right axis determination and acts through effects on Notch signaling around the node as well as through an effect on the morphology and motility of the nodal cilia. This Mus musculus (Mouse) protein is T-box transcription factor TBX6 (Tbx6).